The sequence spans 319 residues: MATH domain and coiled-coil domain-containing protein At3g58200 (319 aa).

Positions 6-132 constitute an MATH domain; that stretch reads DNKFRWVIKN…NEEVKIVVEV (127 aa). A coiled-coil region spans residues 255-302; the sequence is FKVDWLEKKLEEVKEKKKEEQIGETRMQEMKVFKQKCSDIEALMEREK.

This Arabidopsis thaliana (Mouse-ear cress) protein is MATH domain and coiled-coil domain-containing protein At3g58200.